Consider the following 31-residue polypeptide: Cyclotide psybry A (31 aa).

The cyclopeptide (Gly-Asn) cross-link spans 1–31; the sequence is GFNPCGETCIWFPTCHAPGCTCSIANICVRN. Intrachain disulfides connect cysteine 5/cysteine 20, cysteine 9/cysteine 22, and cysteine 15/cysteine 28.

In terms of processing, this is a cyclic peptide.

Functionally, probably participates in a plant defense mechanism. The protein is Cyclotide psybry A of Psychotria brachyceras.